A 334-amino-acid polypeptide reads, in one-letter code: Holliday junction branch migration complex subunit RuvB (334 aa).

Positions 4-184 (ADRLIQPQLQ…FGIPLRLEFY (181 aa)) are large ATPase domain (RuvB-L). ATP is bound by residues Arg-24, Gly-65, Lys-68, Thr-69, Thr-70, 131–133 (EDY), Arg-174, Tyr-184, and Arg-221. Thr-69 is a binding site for Mg(2+). The segment at 185 to 255 (NVKDLSTIVT…VAEQALDLLD (71 aa)) is small ATPAse domain (RuvB-S). The tract at residues 258 to 334 (GEGFDYMDRK…YLHFGMIKPE (77 aa)) is head domain (RuvB-H). DNA contacts are provided by Arg-294, Arg-313, and Arg-318.

This sequence belongs to the RuvB family. Homohexamer. Forms an RuvA(8)-RuvB(12)-Holliday junction (HJ) complex. HJ DNA is sandwiched between 2 RuvA tetramers; dsDNA enters through RuvA and exits via RuvB. An RuvB hexamer assembles on each DNA strand where it exits the tetramer. Each RuvB hexamer is contacted by two RuvA subunits (via domain III) on 2 adjacent RuvB subunits; this complex drives branch migration. In the full resolvosome a probable DNA-RuvA(4)-RuvB(12)-RuvC(2) complex forms which resolves the HJ.

The protein resides in the cytoplasm. The catalysed reaction is ATP + H2O = ADP + phosphate + H(+). Functionally, the RuvA-RuvB-RuvC complex processes Holliday junction (HJ) DNA during genetic recombination and DNA repair, while the RuvA-RuvB complex plays an important role in the rescue of blocked DNA replication forks via replication fork reversal (RFR). RuvA specifically binds to HJ cruciform DNA, conferring on it an open structure. The RuvB hexamer acts as an ATP-dependent pump, pulling dsDNA into and through the RuvAB complex. RuvB forms 2 homohexamers on either side of HJ DNA bound by 1 or 2 RuvA tetramers; 4 subunits per hexamer contact DNA at a time. Coordinated motions by a converter formed by DNA-disengaged RuvB subunits stimulates ATP hydrolysis and nucleotide exchange. Immobilization of the converter enables RuvB to convert the ATP-contained energy into a lever motion, pulling 2 nucleotides of DNA out of the RuvA tetramer per ATP hydrolyzed, thus driving DNA branch migration. The RuvB motors rotate together with the DNA substrate, which together with the progressing nucleotide cycle form the mechanistic basis for DNA recombination by continuous HJ branch migration. Branch migration allows RuvC to scan DNA until it finds its consensus sequence, where it cleaves and resolves cruciform DNA. The protein is Holliday junction branch migration complex subunit RuvB of Shewanella sp. (strain ANA-3).